The primary structure comprises 364 residues: Mannitol-1-phosphate 5-dehydrogenase (364 aa).

Residue 6-17 participates in NAD(+) binding; it reads VLHFGAGNIGRG.

It belongs to the mannitol dehydrogenase family.

The catalysed reaction is D-mannitol 1-phosphate + NAD(+) = beta-D-fructose 6-phosphate + NADH + H(+). In Mycoplasma pneumoniae (strain ATCC 29342 / M129 / Subtype 1) (Mycoplasmoides pneumoniae), this protein is Mannitol-1-phosphate 5-dehydrogenase (mtlD).